A 193-amino-acid chain; its full sequence is Cilia- and flagella-associated protein 20 (193 aa).

It belongs to the CFAP20 family.

It localises to the nucleus. Its subcellular location is the cytoplasm. The protein localises to the cytoskeleton. The protein resides in the microtubule organizing center. It is found in the centrosome. It localises to the centriole. Its subcellular location is the cilium basal body. The protein localises to the cilium axoneme. Its function is as follows. Cilium- and flagellum-specific protein that plays a role in axonemal structure organization and motility. Microtubule inner protein (MIP) part of the dynein-decorated doublet microtubules (DMTs) in cilia axoneme, which is required for motile cilia beating. Involved in the regulation of the size and morphology of cilia. Required for axonemal microtubules polyglutamylation. This is Cilia- and flagella-associated protein 20 (CFAP20) from Gallus gallus (Chicken).